The chain runs to 416 residues: Elongation factor 1-gamma 3 (416 aa).

In terms of domain architecture, GST N-terminal spans 1 to 82 (MALVLHCGSG…YVARLKDNSS (82 aa)). Residues 87–215 (SLIDYSHIEQ…FKQAESVPPV (129 aa)) form the GST C-terminal domain. The segment at 213 to 263 (PPVQKKAAPPKESKAKEAKKEAPKEAPKPKVEASEEEEAPKPKPKNPLDLL) is disordered. Residues 221 to 245 (PPKESKAKEAKKEAPKEAPKPKVEA) show a composition bias toward basic and acidic residues. Residues 256-416 (PKNPLDLLPP…EDLLDAKCFK (161 aa)) enclose the EF-1-gamma C-terminal domain.

In terms of assembly, EF-1 is composed of four subunits: alpha, beta, delta, and gamma.

Probably plays a role in anchoring the complex to other cellular components. The sequence is that of Elongation factor 1-gamma 3 from Oryza sativa subsp. japonica (Rice).